We begin with the raw amino-acid sequence, 33 residues long: Cytochrome b6-f complex subunit 8 (33 aa).

A helical transmembrane segment spans residues 2–22 (LFTVAWASLAAMFSFSIAMVV).

The protein belongs to the PetN family. In terms of assembly, the 4 large subunits of the cytochrome b6-f complex are cytochrome b6, subunit IV (17 kDa polypeptide, PetD), cytochrome f and the Rieske protein, while the 4 small subunits are PetG, PetL, PetM and PetN. The complex functions as a dimer.

The protein resides in the cellular thylakoid membrane. Functionally, component of the cytochrome b6-f complex, which mediates electron transfer between photosystem II (PSII) and photosystem I (PSI), cyclic electron flow around PSI, and state transitions. The chain is Cytochrome b6-f complex subunit 8 from Synechococcus sp. (strain CC9902).